The primary structure comprises 397 residues: Elongation factor Tu (397 aa).

Residues K10 to E206 enclose the tr-type G domain. The interval G19–T26 is G1. G19–T26 serves as a coordination point for GTP. T26 is a Mg(2+) binding site. The G2 stretch occupies residues G62 to S66. The interval D83–G86 is G3. Residues D83–H87 and N138–D141 each bind GTP. The segment at N138 to D141 is G4. Residues S176–L178 are G5.

This sequence belongs to the TRAFAC class translation factor GTPase superfamily. Classic translation factor GTPase family. EF-Tu/EF-1A subfamily. In terms of assembly, monomer.

It is found in the cytoplasm. It catalyses the reaction GTP + H2O = GDP + phosphate + H(+). In terms of biological role, GTP hydrolase that promotes the GTP-dependent binding of aminoacyl-tRNA to the A-site of ribosomes during protein biosynthesis. The polypeptide is Elongation factor Tu (Streptomyces cinnamoneus (Streptoverticillium cinnamoneum)).